Reading from the N-terminus, the 343-residue chain is UDP-3-O-acylglucosamine N-acyltransferase 2 (343 aa).

His-251 (proton acceptor) is an active-site residue.

This sequence belongs to the transferase hexapeptide repeat family. LpxD subfamily. As to quaternary structure, homotrimer.

The enzyme catalyses a UDP-3-O-[(3R)-3-hydroxyacyl]-alpha-D-glucosamine + a (3R)-hydroxyacyl-[ACP] = a UDP-2-N,3-O-bis[(3R)-3-hydroxyacyl]-alpha-D-glucosamine + holo-[ACP] + H(+). The protein operates within bacterial outer membrane biogenesis; LPS lipid A biosynthesis. Its function is as follows. Catalyzes the N-acylation of UDP-3-O-acylglucosamine using 3-hydroxyacyl-ACP as the acyl donor. Is involved in the biosynthesis of lipid A, a phosphorylated glycolipid that anchors the lipopolysaccharide to the outer membrane of the cell. In Legionella pneumophila (strain Lens), this protein is UDP-3-O-acylglucosamine N-acyltransferase 2.